We begin with the raw amino-acid sequence, 151 residues long: Mini-ribonuclease 3 (151 aa).

Residue D28 is part of the active site.

The protein belongs to the MrnC RNase family. As to quaternary structure, homodimer. Mg(2+) is required as a cofactor.

The protein resides in the cytoplasm. Involved in correct processing of both the 5' and 3' ends of 23S rRNA precursor. Processes 30S rRNA precursor transcript even in absence of ribonuclease 3 (Rnc); Rnc processes 30S rRNA into smaller rRNA precursors. The polypeptide is Mini-ribonuclease 3 (Clostridium tetani (strain Massachusetts / E88)).